The chain runs to 214 residues: MAEEVPVSNVEEWKPRTKIGQLVKEGKITSIKELYARNMSIAEPEIIDVLLPNMKYEVIDIGMVQKQTDAGELSRYKVLVVMGNYDGYVSIGVGKSKQLRVAIQKAIRDAKMHVIPVRRGCGSWECTCGESHSLPFLVSGKSGSAEVVLRPAPKGTGLVAGGVLKTLLTYAGIKDVWSFSRGETRTTDNFIMAGYRALYNTYKFVTPVDWARRR.

One can recognise an S5 DRBM domain in the interval 54-117; sequence MKYEVIDIGM…RDAKMHVIPV (64 aa).

This sequence belongs to the universal ribosomal protein uS5 family. Part of the 30S ribosomal subunit. Contacts protein S4.

Its function is as follows. With S4 and S12 plays an important role in translational accuracy. In Metallosphaera sedula (strain ATCC 51363 / DSM 5348 / JCM 9185 / NBRC 15509 / TH2), this protein is Small ribosomal subunit protein uS5.